A 62-amino-acid polypeptide reads, in one-letter code: Photosystem II reaction center protein Z (62 aa).

Helical transmembrane passes span A8–A28 and F41–I61.

Belongs to the PsbZ family. As to quaternary structure, PSII is composed of 1 copy each of membrane proteins PsbA, PsbB, PsbC, PsbD, PsbE, PsbF, PsbH, PsbI, PsbJ, PsbK, PsbL, PsbM, PsbT, PsbY, PsbZ, Psb30/Ycf12, at least 3 peripheral proteins of the oxygen-evolving complex and a large number of cofactors. It forms dimeric complexes.

The protein localises to the plastid. Its subcellular location is the chloroplast thylakoid membrane. Functionally, may control the interaction of photosystem II (PSII) cores with the light-harvesting antenna, regulates electron flow through the 2 photosystem reaction centers. PSII is a light-driven water plastoquinone oxidoreductase, using light energy to abstract electrons from H(2)O, generating a proton gradient subsequently used for ATP formation. The sequence is that of Photosystem II reaction center protein Z from Pinus thunbergii (Japanese black pine).